The sequence spans 421 residues: Medium-chain specific acyl-CoA dehydrogenase, mitochondrial (421 aa).

The N-terminal 25 residues, 1-25, are a transit peptide targeting the mitochondrion; that stretch reads MAAGFGRCCRVLRSISRFHWRSQHT. K69 carries the N6-acetyllysine; alternate modification. An N6-succinyllysine; alternate modification is found at K69. 158-167 is a binding site for FAD; the sequence is YCVTEPGAGS. S167 is a binding site for octanoyl-CoA. At K179 the chain carries N6-succinyllysine. Residue 191–193 participates in FAD binding; the sequence is WIT. An N6-acetyllysine; alternate mark is found at K212, K217, K259, and K271. 4 positions are modified to N6-succinyllysine; alternate: K212, K217, K259, and K271. D278 is an octanoyl-CoA binding site. At K279 the chain carries N6-acetyllysine. Residue R281 participates in octanoyl-CoA binding. Position 301 is an N6-acetyllysine (K301). Residues 306–308 and 316–317 contribute to the FAD site; these read RKT and HQ. Phosphothreonine is present on T351. Residues 374–378 and 401–405 each bind FAD; these read QILGG and EGTSQ. E401 contributes to the octanoyl-CoA binding site. E401 (proton acceptor) is an active-site residue.

The protein belongs to the acyl-CoA dehydrogenase family. In terms of assembly, homotetramer. Interacts with the heterodimeric electron transfer flavoprotein ETF. Requires FAD as cofactor. Post-translationally, acetylated. Could occur at proximity of the cofactor-binding sites and reduce the catalytic activity. Could be deacetylated by SIRT3.

It localises to the mitochondrion matrix. It catalyses the reaction a medium-chain 2,3-saturated fatty acyl-CoA + oxidized [electron-transfer flavoprotein] + H(+) = a medium-chain (2E)-enoyl-CoA + reduced [electron-transfer flavoprotein]. The catalysed reaction is pentanoyl-CoA + oxidized [electron-transfer flavoprotein] + H(+) = (2E)-pentenoyl-CoA + reduced [electron-transfer flavoprotein]. The enzyme catalyses hexanoyl-CoA + oxidized [electron-transfer flavoprotein] + H(+) = (2E)-hexenoyl-CoA + reduced [electron-transfer flavoprotein]. It carries out the reaction octanoyl-CoA + oxidized [electron-transfer flavoprotein] + H(+) = (2E)-octenoyl-CoA + reduced [electron-transfer flavoprotein]. It catalyses the reaction decanoyl-CoA + oxidized [electron-transfer flavoprotein] + H(+) = (2E)-decenoyl-CoA + reduced [electron-transfer flavoprotein]. The catalysed reaction is dodecanoyl-CoA + oxidized [electron-transfer flavoprotein] + H(+) = (2E)-dodecenoyl-CoA + reduced [electron-transfer flavoprotein]. The enzyme catalyses tetradecanoyl-CoA + oxidized [electron-transfer flavoprotein] + H(+) = (2E)-tetradecenoyl-CoA + reduced [electron-transfer flavoprotein]. It carries out the reaction oxidized [electron-transfer flavoprotein] + hexadecanoyl-CoA + H(+) = (2E)-hexadecenoyl-CoA + reduced [electron-transfer flavoprotein]. It participates in lipid metabolism; mitochondrial fatty acid beta-oxidation. Medium-chain specific acyl-CoA dehydrogenase is one of the acyl-CoA dehydrogenases that catalyze the first step of mitochondrial fatty acid beta-oxidation, an aerobic process breaking down fatty acids into acetyl-CoA and allowing the production of energy from fats. The first step of fatty acid beta-oxidation consists in the removal of one hydrogen from C-2 and C-3 of the straight-chain fatty acyl-CoA thioester, resulting in the formation of trans-2-enoyl-CoA. Electron transfer flavoprotein (ETF) is the electron acceptor that transfers electrons to the main mitochondrial respiratory chain via ETF-ubiquinone oxidoreductase (ETF dehydrogenase). Among the different mitochondrial acyl-CoA dehydrogenases, medium-chain specific acyl-CoA dehydrogenase acts specifically on acyl-CoAs with saturated 6 to 12 carbons long primary chains. This is Medium-chain specific acyl-CoA dehydrogenase, mitochondrial from Homo sapiens (Human).